We begin with the raw amino-acid sequence, 98 residues long: uncharacterized protein (98 aa).

This is an uncharacterized protein from Homo sapiens (Human).